The following is a 120-amino-acid chain: UPF0231 protein YacL (120 aa).

It belongs to the UPF0231 family.

This chain is UPF0231 protein YacL, found in Salmonella heidelberg (strain SL476).